Reading from the N-terminus, the 132-residue chain is Fluoride-specific ion channel FluC (132 aa).

The next 4 membrane-spanning stretches (helical) occupy residues 5 to 25 (LYIA…SGLV), 32 to 52 (TFPW…GFFA), 70 to 90 (FVMT…LQTL), and 105 to 125 (VVGS…AAVG). Residues G77 and T80 each coordinate Na(+).

Belongs to the fluoride channel Fluc/FEX (TC 1.A.43) family.

It is found in the cell inner membrane. The catalysed reaction is fluoride(in) = fluoride(out). With respect to regulation, na(+) is not transported, but it plays an essential structural role and its presence is essential for fluoride channel function. Functionally, fluoride-specific ion channel. Important for reducing fluoride concentration in the cell, thus reducing its toxicity. This is Fluoride-specific ion channel FluC from Opitutus terrae (strain DSM 11246 / JCM 15787 / PB90-1).